The chain runs to 777 residues: 5-methyltetrahydropteroyltriglutamate--homocysteine methyltransferase (777 aa).

Residues 17-20 (RELK) and Lys-132 contribute to the 5-methyltetrahydropteroyltri-L-glutamate site. L-homocysteine contacts are provided by residues 455 to 457 (IGS) and Glu-508. Residues 455 to 457 (IGS) and Glu-508 contribute to the L-methionine site. 5-methyltetrahydropteroyltri-L-glutamate contacts are provided by residues 539 to 540 (RC) and Trp-585. Asp-623 provides a ligand contact to L-homocysteine. Residue Asp-623 coordinates L-methionine. Glu-629 serves as a coordination point for 5-methyltetrahydropteroyltri-L-glutamate. 3 residues coordinate Zn(2+): His-665, Cys-667, and Glu-689. The active-site Proton donor is His-718. Cys-750 contributes to the Zn(2+) binding site.

The protein belongs to the vitamin-B12 independent methionine synthase family. Requires Zn(2+) as cofactor.

It catalyses the reaction 5-methyltetrahydropteroyltri-L-glutamate + L-homocysteine = tetrahydropteroyltri-L-glutamate + L-methionine. It participates in amino-acid biosynthesis; L-methionine biosynthesis via de novo pathway; L-methionine from L-homocysteine (MetE route): step 1/1. In terms of biological role, catalyzes the transfer of a methyl group from 5-methyltetrahydrofolate to homocysteine resulting in methionine formation. The protein is 5-methyltetrahydropteroyltriglutamate--homocysteine methyltransferase of Caulobacter vibrioides (strain ATCC 19089 / CIP 103742 / CB 15) (Caulobacter crescentus).